Consider the following 347-residue polypeptide: Trace amine-associated receptor 4 (347 aa).

The Extracellular portion of the chain corresponds to Met1–Tyr37. An N-linked (GlcNAc...) asparagine glycan is attached at Asn20. Cystine bridges form between Cys23/Cys187 and Cys106/Cys191. Residues Leu38–Ile58 traverse the membrane as a helical segment. Over Ala59–Asn69 the chain is Cytoplasmic. The chain crosses the membrane as a helical span at residues Phe70–Ser90. The Extracellular portion of the chain corresponds to Met91 to Ser110. Residues Cys111–Val129 traverse the membrane as a helical segment. Residues Asp130 to Val149 are Cytoplasmic-facing. Residues Val150–Phe170 form a helical membrane-spanning segment. At Ser171–Lys197 the chain is on the extracellular side. The extracellular Loop 2 (ECL2) stretch occupies residues Leu175–Thr188. A helical transmembrane segment spans residues Leu198–Ile218. At Tyr219–Lys260 the chain is on the cytoplasmic side. A helical transmembrane segment spans residues Thr261–Ile281. Residues Thr282–Asn296 are Extracellular-facing. A helical membrane pass occupies residues Val297–Tyr317. Topologically, residues Pro318–Pro347 are cytoplasmic.

This sequence belongs to the G-protein coupled receptor 1 family. In terms of tissue distribution, specifically expressed in neurons of the olfactory epithelium, to discrete glomeruli predominantly localized to a confined bulb region. Present in the dorsal area of the main olfactory epithelium.

It localises to the cell membrane. Olfactory receptor specific for 2-phenylethylamine, a trace amine present at high concentration in the urine of carnivore species, playing a key role in fear and avoidance responses. 2-phenylethylamine acts as a kairomone in the chemical detection of carnivore odor and triggers fear in mice. This receptor is probably mediated by the G(s)-class of G-proteins which activate adenylate cyclase. The polypeptide is Trace amine-associated receptor 4 (Mus musculus (Mouse)).